A 128-amino-acid polypeptide reads, in one-letter code: Methylglyoxal synthase (128 aa).

The MGS-like domain occupies 1 to 128 (MRIALIAHDR…MQDHPGNRQA (128 aa)). Substrate-binding positions include H8, K12, 34-37 (TGTT), and 54-55 (SG). D60 (proton donor/acceptor) is an active-site residue. Residue H87 coordinates substrate.

The protein belongs to the methylglyoxal synthase family.

It carries out the reaction dihydroxyacetone phosphate = methylglyoxal + phosphate. In terms of biological role, catalyzes the formation of methylglyoxal from dihydroxyacetone phosphate. The polypeptide is Methylglyoxal synthase (Moorella thermoacetica (strain ATCC 39073 / JCM 9320)).